We begin with the raw amino-acid sequence, 639 residues long: tRNA uridine 5-carboxymethylaminomethyl modification enzyme MnmG (639 aa).

Residue 15–20 (GAGHAG) coordinates FAD. 276-290 (GPRYCPSIEDKIVRF) contacts NAD(+).

This sequence belongs to the MnmG family. In terms of assembly, homodimer. Heterotetramer of two MnmE and two MnmG subunits. The cofactor is FAD.

The protein resides in the cytoplasm. In terms of biological role, NAD-binding protein involved in the addition of a carboxymethylaminomethyl (cmnm) group at the wobble position (U34) of certain tRNAs, forming tRNA-cmnm(5)s(2)U34. The polypeptide is tRNA uridine 5-carboxymethylaminomethyl modification enzyme MnmG (Streptococcus gordonii (strain Challis / ATCC 35105 / BCRC 15272 / CH1 / DL1 / V288)).